The chain runs to 288 residues: Nucleotide-binding protein Gura_2968 (288 aa).

8–15 (GLSGSGKS) lines the ATP pocket. GTP is bound at residue 59-62 (DIRG).

This sequence belongs to the RapZ-like family.

Functionally, displays ATPase and GTPase activities. The sequence is that of Nucleotide-binding protein Gura_2968 from Geotalea uraniireducens (strain Rf4) (Geobacter uraniireducens).